A 252-amino-acid chain; its full sequence is 3-dehydroquinate dehydratase (252 aa).

Residues S21, 46–48 (EWR), and R82 each bind 3-dehydroquinate. H143 functions as the Proton donor/acceptor in the catalytic mechanism. Catalysis depends on K170, which acts as the Schiff-base intermediate with substrate. 3-dehydroquinate contacts are provided by R213, S232, and Q236.

This sequence belongs to the type-I 3-dehydroquinase family. In terms of assembly, homodimer.

The enzyme catalyses 3-dehydroquinate = 3-dehydroshikimate + H2O. It participates in metabolic intermediate biosynthesis; chorismate biosynthesis; chorismate from D-erythrose 4-phosphate and phosphoenolpyruvate: step 3/7. In terms of biological role, involved in the third step of the chorismate pathway, which leads to the biosynthesis of aromatic amino acids. Catalyzes the cis-dehydration of 3-dehydroquinate (DHQ) and introduces the first double bond of the aromatic ring to yield 3-dehydroshikimate. This is 3-dehydroquinate dehydratase from Escherichia coli O157:H7.